The following is a 69-amino-acid chain: Cytochrome c oxidase subunit 8A, mitochondrial (69 aa).

The transit peptide at 1 to 25 directs the protein to the mitochondrion; sequence MSVLTPLLLRSLTGSARRLMVPRAQ. An SIFI-degron motif is present at residues 2–19; the sequence is SVLTPLLLRSLTGSARRL. At 26–36 the chain is on the mitochondrial matrix side; it reads VHSKPAREQLG. Residues 37–60 traverse the membrane as a helical segment; it reads VLDITIGLTSCFVCCLLPAGWVLS. Residues 61–69 are Mitochondrial intermembrane-facing; sequence HLESYKKRE.

It belongs to the cytochrome c oxidase VIII family. In terms of assembly, component of the cytochrome c oxidase (complex IV, CIV), a multisubunit enzyme composed of 14 subunits. The complex is composed of a catalytic core of 3 subunits MT-CO1, MT-CO2 and MT-CO3, encoded in the mitochondrial DNA, and 11 supernumerary subunits COX4I, COX5A, COX5B, COX6A, COX6B, COX6C, COX7A, COX7B, COX7C, COX8 and NDUFA4, which are encoded in the nuclear genome. The complex exists as a monomer or a dimer and forms supercomplexes (SCs) in the inner mitochondrial membrane with NADH-ubiquinone oxidoreductase (complex I, CI) and ubiquinol-cytochrome c oxidoreductase (cytochrome b-c1 complex, complex III, CIII), resulting in different assemblies (supercomplex SCI(1)III(2)IV(1) and megacomplex MCI(2)III(2)IV(2)). In response to mitochondrial stress, the precursor protein is ubiquitinated by the SIFI complex in the cytoplasm before mitochondrial import, leading to its degradation. Within the SIFI complex, UBR4 initiates ubiquitin chain that are further elongated or branched by KCMF1.

The protein localises to the mitochondrion inner membrane. Its pathway is energy metabolism; oxidative phosphorylation. Its function is as follows. Component of the cytochrome c oxidase, the last enzyme in the mitochondrial electron transport chain which drives oxidative phosphorylation. The respiratory chain contains 3 multisubunit complexes succinate dehydrogenase (complex II, CII), ubiquinol-cytochrome c oxidoreductase (cytochrome b-c1 complex, complex III, CIII) and cytochrome c oxidase (complex IV, CIV), that cooperate to transfer electrons derived from NADH and succinate to molecular oxygen, creating an electrochemical gradient over the inner membrane that drives transmembrane transport and the ATP synthase. Cytochrome c oxidase is the component of the respiratory chain that catalyzes the reduction of oxygen to water. Electrons originating from reduced cytochrome c in the intermembrane space (IMS) are transferred via the dinuclear copper A center (CU(A)) of subunit 2 and heme A of subunit 1 to the active site in subunit 1, a binuclear center (BNC) formed by heme A3 and copper B (CU(B)). The BNC reduces molecular oxygen to 2 water molecules using 4 electrons from cytochrome c in the IMS and 4 protons from the mitochondrial matrix. The sequence is that of Cytochrome c oxidase subunit 8A, mitochondrial (Cox8a) from Mus musculus (Mouse).